The primary structure comprises 390 residues: Succinate--CoA ligase [ADP-forming] subunit beta (390 aa).

The 240-residue stretch at 9-248 (KDILRKFGVS…ISEEDPFEVE (240 aa)) folds into the ATP-grasp domain. ATP-binding positions include lysine 50, 57-59 (GRG), glutamate 103, methionine 106, and glutamate 111. Residues asparagine 203 and aspartate 217 each contribute to the Mg(2+) site. Substrate is bound by residues asparagine 268 and 325–327 (GIV).

Belongs to the succinate/malate CoA ligase beta subunit family. In terms of assembly, heterotetramer of two alpha and two beta subunits. The cofactor is Mg(2+).

The catalysed reaction is succinate + ATP + CoA = succinyl-CoA + ADP + phosphate. It catalyses the reaction GTP + succinate + CoA = succinyl-CoA + GDP + phosphate. It functions in the pathway carbohydrate metabolism; tricarboxylic acid cycle; succinate from succinyl-CoA (ligase route): step 1/1. In terms of biological role, succinyl-CoA synthetase functions in the citric acid cycle (TCA), coupling the hydrolysis of succinyl-CoA to the synthesis of either ATP or GTP and thus represents the only step of substrate-level phosphorylation in the TCA. The beta subunit provides nucleotide specificity of the enzyme and binds the substrate succinate, while the binding sites for coenzyme A and phosphate are found in the alpha subunit. The sequence is that of Succinate--CoA ligase [ADP-forming] subunit beta from Prosthecochloris aestuarii (strain DSM 271 / SK 413).